A 326-amino-acid polypeptide reads, in one-letter code: Glyoxylate/hydroxypyruvate reductase B (326 aa).

Catalysis depends on residues arginine 237 and glutamate 266. Histidine 285 functions as the Proton donor in the catalytic mechanism.

This sequence belongs to the D-isomer specific 2-hydroxyacid dehydrogenase family. GhrB subfamily. As to quaternary structure, homodimer.

It localises to the cytoplasm. It catalyses the reaction glycolate + NADP(+) = glyoxylate + NADPH + H(+). The enzyme catalyses (R)-glycerate + NAD(+) = 3-hydroxypyruvate + NADH + H(+). The catalysed reaction is (R)-glycerate + NADP(+) = 3-hydroxypyruvate + NADPH + H(+). Catalyzes the NADPH-dependent reduction of glyoxylate and hydroxypyruvate into glycolate and glycerate, respectively. In Yersinia enterocolitica serotype O:8 / biotype 1B (strain NCTC 13174 / 8081), this protein is Glyoxylate/hydroxypyruvate reductase B.